Here is a 247-residue protein sequence, read N- to C-terminus: tRNA pseudouridine synthase A (247 aa).

The active-site Nucleophile is the Asp53. Residue Tyr111 coordinates substrate.

The protein belongs to the tRNA pseudouridine synthase TruA family. As to quaternary structure, homodimer.

It carries out the reaction uridine(38/39/40) in tRNA = pseudouridine(38/39/40) in tRNA. Functionally, formation of pseudouridine at positions 38, 39 and 40 in the anticodon stem and loop of transfer RNAs. This chain is tRNA pseudouridine synthase A, found in Lacticaseibacillus casei (strain BL23) (Lactobacillus casei).